The sequence spans 105 residues: Nitrogen fixation nifHD region GlnB-like protein 1 (105 aa).

Belongs to the P(II) protein family.

In terms of biological role, could be involved in the regulation of nitrogen fixation. This is Nitrogen fixation nifHD region GlnB-like protein 1 (glnBA) from Methanobacterium ivanovii.